The chain runs to 245 residues: tRNA pseudouridine synthase A (245 aa).

D52 acts as the Nucleophile in catalysis. Y111 is a substrate binding site.

This sequence belongs to the tRNA pseudouridine synthase TruA family. As to quaternary structure, homodimer.

It carries out the reaction uridine(38/39/40) in tRNA = pseudouridine(38/39/40) in tRNA. Formation of pseudouridine at positions 38, 39 and 40 in the anticodon stem and loop of transfer RNAs. This chain is tRNA pseudouridine synthase A, found in Rickettsia akari (strain Hartford).